A 345-amino-acid chain; its full sequence is Platelet-derived growth factor C (345 aa).

The signal sequence occupies residues 1–22 (MLLFGFLLLTFALVSQRQGAEA). Asparagine 25 and asparagine 55 each carry an N-linked (GlcNAc...) asparagine glycan. Residues 46–163 (HEKIITVSAN…PGFCIHYTLL (118 aa)) enclose the CUB domain. 4 disulfide bridges follow: cysteine 104-cysteine 124, cysteine 250-cysteine 294, cysteine 280-cysteine 335, and cysteine 287-cysteine 337.

It belongs to the PDGF/VEGF growth factor family. In terms of assembly, homodimer; disulfide-linked. Interacts with PDGFRA homodimers, and with heterodimers formed by PDGFRA and PDGFRB. In terms of processing, proteolytic removal of the N-terminal CUB domain releasing the core domain is necessary for unmasking the receptor-binding epitopes of the core domain. Cleavage after basic residues in the hinge region (region connecting the CUB and growth factor domains) gives rise to the receptor-binding form.

Its subcellular location is the secreted. Functionally, growth factor that plays an essential role in the regulation of embryonic development, cell proliferation, cell migration, survival and chemotaxis. Potent mitogen and chemoattractant for cells of mesenchymal origin. Required for normal skeleton formation during embryonic development. Required for normal skin morphogenesis during embryonic development. Plays an important role in wound healing, in angiogenesis and blood vessel development. The chain is Platelet-derived growth factor C (PDGFC) from Gekko japonicus (Schlegel's Japanese gecko).